Reading from the N-terminus, the 94-residue chain is Co-chaperonin GroES (94 aa).

This sequence belongs to the GroES chaperonin family. As to quaternary structure, heptamer of 7 subunits arranged in a ring. Interacts with the chaperonin GroEL.

It is found in the cytoplasm. In terms of biological role, together with the chaperonin GroEL, plays an essential role in assisting protein folding. The GroEL-GroES system forms a nano-cage that allows encapsulation of the non-native substrate proteins and provides a physical environment optimized to promote and accelerate protein folding. GroES binds to the apical surface of the GroEL ring, thereby capping the opening of the GroEL channel. This is Co-chaperonin GroES from Listeria welshimeri serovar 6b (strain ATCC 35897 / DSM 20650 / CCUG 15529 / CIP 8149 / NCTC 11857 / SLCC 5334 / V8).